Here is a 214-residue protein sequence, read N- to C-terminus: LexA repressor (214 aa).

Positions 28 to 48 (IRDIQRELSISSTSVVAYNLR) form a DNA-binding region, H-T-H motif. Active-site for autocatalytic cleavage activity residues include Ser133 and Lys172.

The protein belongs to the peptidase S24 family. In terms of assembly, homodimer.

It carries out the reaction Hydrolysis of Ala-|-Gly bond in repressor LexA.. Functionally, represses a number of genes involved in the response to DNA damage (SOS response), including recA and lexA. In the presence of single-stranded DNA, RecA interacts with LexA causing an autocatalytic cleavage which disrupts the DNA-binding part of LexA, leading to derepression of the SOS regulon and eventually DNA repair. This Herpetosiphon aurantiacus (strain ATCC 23779 / DSM 785 / 114-95) protein is LexA repressor.